A 385-amino-acid chain; its full sequence is S-adenosylmethionine synthase (385 aa).

His-15 serves as a coordination point for ATP. Position 17 (Asp-17) interacts with Mg(2+). K(+) is bound at residue Glu-43. The L-methionine site is built by Glu-56 and Gln-99. The segment at 99-109 (QSPEIAQGVDE) is flexible loop. Residues 164 to 166 (DAK), 230 to 231 (RF), Asp-239, 245 to 246 (RK), Ala-262, and Lys-266 each bind ATP. L-methionine is bound at residue Asp-239. Residue Lys-270 coordinates L-methionine.

It belongs to the AdoMet synthase family. As to quaternary structure, homotetramer; dimer of dimers. Requires Mg(2+) as cofactor. It depends on K(+) as a cofactor.

It localises to the cytoplasm. The enzyme catalyses L-methionine + ATP + H2O = S-adenosyl-L-methionine + phosphate + diphosphate. It functions in the pathway amino-acid biosynthesis; S-adenosyl-L-methionine biosynthesis; S-adenosyl-L-methionine from L-methionine: step 1/1. Catalyzes the formation of S-adenosylmethionine (AdoMet) from methionine and ATP. The overall synthetic reaction is composed of two sequential steps, AdoMet formation and the subsequent tripolyphosphate hydrolysis which occurs prior to release of AdoMet from the enzyme. The protein is S-adenosylmethionine synthase of Hydrogenovibrio crunogenus (strain DSM 25203 / XCL-2) (Thiomicrospira crunogena).